Consider the following 37-residue polypeptide: Large ribosomal subunit protein bL36 (37 aa).

This sequence belongs to the bacterial ribosomal protein bL36 family.

The chain is Large ribosomal subunit protein bL36 from Synechococcus sp. (strain WH7803).